The chain runs to 274 residues: Centromere protein K (274 aa).

The tract at residues 1-21 (MSGYQHELPPNISKTSPAPEE) is disordered. Positions 96 to 159 (KEELEKIAQE…NQLTAFSEKR (64 aa)) form a coiled coil.

This sequence belongs to the CENP-K/MCM22 family.

It is found in the nucleus. It localises to the chromosome. The protein localises to the centromere. The protein resides in the kinetochore. Probable component of a centromeric complex involved in assembly of kinetochore proteins, mitotic progression and chromosome segregation. The sequence is that of Centromere protein K (cenpk) from Xenopus laevis (African clawed frog).